Here is an 822-residue protein sequence, read N- to C-terminus: Calpain-3 (822 aa).

The tract at residues 1–36 is disordered; it reads MPTVISASVAPRTGAEPRSPGPIAQAAQGKGTEAGG. Residues 74–418 enclose the Calpain catalytic domain; the sequence is LFVDPEFPPD…FTKLEICNLT (345 aa). Active-site residues include Cys-129, His-335, and Asn-359. Residues 419-587 form a domain III region; sequence ADALESDKLQ…KRNLSEEVEN (169 aa). Residues 588–649 form a linker region; it reads TISVDRPVKK…LKPGNIDQES (62 aa). Residues 600–651 form a disordered region; sequence PKPIIFGSDRANSNKELGVDQESEEGKDNTSPDKQAKSPQLKPGNIDQESKE. Residues 623–635 are compositionally biased toward basic and acidic residues; that stretch reads EEGKDNTSPDKQA. 4 EF-hand domains span residues 650 to 684, 693 to 726, 723 to 758, and 788 to 822; these read KEQR…VVNK, FTLE…KKIK, KKIK…AGFH, and VRLE…TMYA. Residues 650–822 are domain IV; the sequence is KEQRQFRNIF…LEWLQLTMYA (173 aa). Ala-663, Asp-666, Glu-668, Glu-673, Asp-706, Asp-708, Ser-710, Arg-712, Glu-717, Asp-736, Asp-738, Ser-740, Thr-742, Glu-747, Asp-801, Asp-803, Asp-805, and Ile-807 together coordinate Ca(2+).

This sequence belongs to the peptidase C2 family. In terms of assembly, homodimer; via EF-hand domain 4. Interacts with TTN/titin. Interacts with CMYA5; this interaction, which results in CMYA5 proteolysis, may protect CAPN3 from autolysis. Interacts with SIMC1. Interacts with UTP25; the interaction is required for CAPN3 translocation to the nucleolus. As to expression, skeletal muscle.

It localises to the cytoplasm. The protein localises to the nucleus. It is found in the nucleolus. It catalyses the reaction Broad endopeptidase activity.. With respect to regulation, activated by micromolar concentrations of calcium and inhibited by calpastatin. Its function is as follows. Calcium-regulated non-lysosomal thiol-protease. Proteolytically cleaves CTBP1. Mediates, with UTP25, the proteasome-independent degradation of p53/TP53. The sequence is that of Calpain-3 (CAPN3) from Ovis aries (Sheep).